A 481-amino-acid polypeptide reads, in one-letter code: UDP-N-acetylmuramoyl-L-alanyl-D-glutamate--L-lysine ligase (481 aa).

Residue serine 42 coordinates UDP-N-acetyl-alpha-D-muramoyl-L-alanyl-D-glutamate. 118-124 provides a ligand contact to ATP; it reads GTKGKTT. UDP-N-acetyl-alpha-D-muramoyl-L-alanyl-D-glutamate is bound by residues 160-161, serine 187, and arginine 195; that span reads TT. Lysine 229 is subject to N6-carboxylysine. The L-lysine recognition motif motif lies at 404-407; it reads DDPN.

This sequence belongs to the MurCDEF family. MurE subfamily. Carboxylation is probably crucial for Mg(2+) binding and, consequently, for the gamma-phosphate positioning of ATP.

The protein resides in the cytoplasm. The catalysed reaction is UDP-N-acetyl-alpha-D-muramoyl-L-alanyl-D-glutamate + L-lysine + ATP = UDP-N-acetyl-alpha-D-muramoyl-L-alanyl-gamma-D-glutamyl-L-lysine + ADP + phosphate + H(+). Its pathway is cell wall biogenesis; peptidoglycan biosynthesis. Functionally, catalyzes the addition of L-lysine to the nucleotide precursor UDP-N-acetylmuramoyl-L-alanyl-D-glutamate (UMAG) in the biosynthesis of bacterial cell-wall peptidoglycan. This is UDP-N-acetylmuramoyl-L-alanyl-D-glutamate--L-lysine ligase from Streptococcus pneumoniae (strain ATCC BAA-255 / R6).